Consider the following 435-residue polypeptide: MSKKKVNLGVRDVPTPFSWVSFSLQHLFAMFGSTILVPKLVGMSPAVALVTSGIGTLAYLLITKGQIPAYLGSSFAFISPIILVKATGGPGAAMVGAFLAGLVYGLIALLIRQLGTGWLMKILPPVVVGPVIIVIGLGLASTAVNMAMYADPNASELVYSLKHFSVAGVTLAITIICAIFLRGFLSLIPVLIGIIGGYLFALTQGIVNFQPVLDAKWFAVPEFIIPFKDYSPSVTLGIAAAMVPVAFVTMSEHIGHQMVLSKVVGQDFIKKPGLHRSIMGDSVATILASLIGGPPTTTYGENIGVLAITRVFSVFVIGGAAVIALCFGFIGKISALISSVPSAVMGGVSFLLFGIIASSGLRMLIDNKIDYENNRNLIITSVILVIGVGGAFIQVSQGGFQVSGMALAAIVGVILNLILPQAKEEQADTSEQHHI.

The next 12 membrane-spanning stretches (helical) occupy residues Phe-17–Val-37, Gly-42–Ile-62, Ile-67–Thr-87, Gly-91–Ile-111, Ile-122–Thr-142, Leu-161–Leu-181, Leu-191–Leu-213, Val-234–Ile-254, Val-311–Gly-331, Leu-336–Ile-356, Asn-376–Ser-396, and Gly-399–Leu-419.

The protein belongs to the nucleobase:cation symporter-2 (NCS2) (TC 2.A.40) family.

It localises to the cell membrane. Transport of uracil in the cell. This is Uracil permease (pyrP) from Bacillus subtilis (strain 168).